A 461-amino-acid polypeptide reads, in one-letter code: ATP synthase subunit beta (461 aa).

151-158 (GGAGVGKT) lines the ATP pocket.

The protein belongs to the ATPase alpha/beta chains family. F-type ATPases have 2 components, CF(1) - the catalytic core - and CF(0) - the membrane proton channel. CF(1) has five subunits: alpha(3), beta(3), gamma(1), delta(1), epsilon(1). CF(0) has three main subunits: a(1), b(2) and c(9-12). The alpha and beta chains form an alternating ring which encloses part of the gamma chain. CF(1) is attached to CF(0) by a central stalk formed by the gamma and epsilon chains, while a peripheral stalk is formed by the delta and b chains.

It is found in the cell inner membrane. The enzyme catalyses ATP + H2O + 4 H(+)(in) = ADP + phosphate + 5 H(+)(out). Its function is as follows. Produces ATP from ADP in the presence of a proton gradient across the membrane. The catalytic sites are hosted primarily by the beta subunits. This is ATP synthase subunit beta from Coxiella burnetii (strain Dugway 5J108-111).